The primary structure comprises 388 residues: Mannitol-1-phosphate 5-dehydrogenase (388 aa).

Residue 5 to 16 participates in NAD(+) binding; the sequence is AIQFGGGNIGRG. The active site involves K213.

It belongs to the mannitol dehydrogenase family. In terms of assembly, monomer.

The catalysed reaction is D-mannitol 1-phosphate + NAD(+) = beta-D-fructose 6-phosphate + NADH + H(+). Functionally, catalyzes the NAD(H)-dependent interconversion of D-fructose 6-phosphate and D-mannitol 1-phosphate in the mannitol metabolic pathway. In Aspergillus clavatus (strain ATCC 1007 / CBS 513.65 / DSM 816 / NCTC 3887 / NRRL 1 / QM 1276 / 107), this protein is Mannitol-1-phosphate 5-dehydrogenase (mpdA).